The following is a 500-amino-acid chain: Probable cytosol aminopeptidase (500 aa).

Residues Lys-264 and Asp-269 each coordinate Mn(2+). Residue Lys-276 is part of the active site. The Mn(2+) site is built by Asp-287, Asp-346, and Glu-348. Residue Arg-350 is part of the active site.

Belongs to the peptidase M17 family. Mn(2+) is required as a cofactor.

It is found in the cytoplasm. The catalysed reaction is Release of an N-terminal amino acid, Xaa-|-Yaa-, in which Xaa is preferably Leu, but may be other amino acids including Pro although not Arg or Lys, and Yaa may be Pro. Amino acid amides and methyl esters are also readily hydrolyzed, but rates on arylamides are exceedingly low.. It catalyses the reaction Release of an N-terminal amino acid, preferentially leucine, but not glutamic or aspartic acids.. In terms of biological role, presumably involved in the processing and regular turnover of intracellular proteins. Catalyzes the removal of unsubstituted N-terminal amino acids from various peptides. The chain is Probable cytosol aminopeptidase from Rhodopseudomonas palustris (strain TIE-1).